Reading from the N-terminus, the 256-residue chain is Small ribosomal subunit protein eS1 (256 aa).

A compositionally biased stretch (basic residues) spans 1 to 18 (MAVGKNKRLSKGKKGLKK). A disordered region spans residues 1–20 (MAVGKNKRLSKGKKGLKKKA). A2 carries the N-acetylalanine; partial modification.

The protein belongs to the eukaryotic ribosomal protein eS1 family. Component of the small ribosomal subunit. Mature ribosomes consist of a small (40S) and a large (60S) subunit. The 40S subunit contains about 33 different proteins and 1 molecule of RNA (18S). The 60S subunit contains about 49 different proteins and 3 molecules of RNA (25S, 5.8S and 5S).

It localises to the cytoplasm. The sequence is that of Small ribosomal subunit protein eS1 from Chaetomium globosum (strain ATCC 6205 / CBS 148.51 / DSM 1962 / NBRC 6347 / NRRL 1970) (Soil fungus).